A 478-amino-acid polypeptide reads, in one-letter code: Growth/differentiation factor 10 (478 aa).

Positions 1-33 (MAHVPARTSPGPGPQLLLLLLPLFLLLLRDVAG) are cleaved as a signal peptide. Positions 34-368 (SHRAPAWSAL…EKTMQKARRK (335 aa)) are excised as a propeptide. N-linked (GlcNAc...) asparagine glycans are attached at residues N118, N156, and N281. Positions 266–319 (YDPFPAGDPEPRAAPNNSADPRVRRAAQATGPLQDNELPGLDERPPRAHAQHFH) are disordered. 3 cysteine pairs are disulfide-bonded: C376/C443, C405/C475, and C409/C477. N-linked (GlcNAc...) asparagine glycosylation is present at N469.

Belongs to the TGF-beta family. As to quaternary structure, homodimer or heterodimer. Can form a non-covalent complex of the mature region and the pro-region. Expressed in femur, brain, lung, skeletal muscle, pancreas and testis.

The protein resides in the secreted. In terms of biological role, growth factor involved in osteogenesis and adipogenesis. Plays an inhibitory role in the process of osteoblast differentiation via SMAD2/3 pathway. Plays an inhibitory role in the process of adipogenesis. This is Growth/differentiation factor 10 from Homo sapiens (Human).